A 247-amino-acid polypeptide reads, in one-letter code: Carboxy-S-adenosyl-L-methionine synthase (247 aa).

Residues Y39, 64-66 (GCS), 89-90 (DN), 117-118 (DI), N132, and R199 contribute to the S-adenosyl-L-methionine site.

It belongs to the class I-like SAM-binding methyltransferase superfamily. Cx-SAM synthase family. Homodimer.

It carries out the reaction prephenate + S-adenosyl-L-methionine = carboxy-S-adenosyl-L-methionine + 3-phenylpyruvate + H2O. Its function is as follows. Catalyzes the conversion of S-adenosyl-L-methionine (SAM) to carboxy-S-adenosyl-L-methionine (Cx-SAM). This is Carboxy-S-adenosyl-L-methionine synthase from Escherichia coli O139:H28 (strain E24377A / ETEC).